We begin with the raw amino-acid sequence, 148 residues long: Small ribosomal subunit protein bS6 (148 aa).

The tract at residues 96–148 is disordered; it reads HEEGQSAMLTRRDDRRERDGDDRPRRREGGFDRGDRGDRGPRRPRDNEAGEGA.

Belongs to the bacterial ribosomal protein bS6 family.

Binds together with bS18 to 16S ribosomal RNA. This is Small ribosomal subunit protein bS6 from Brucella melitensis biotype 1 (strain ATCC 23456 / CCUG 17765 / NCTC 10094 / 16M).